The chain runs to 175 residues: ATP synthase subunit d, mitochondrial (175 aa).

Residue Ser2 is modified to N-acetylserine.

F-type ATP synthases have 2 components, the catalytic core F(1) and the membrane-embedded component F(0), linked together by a central stalk and a peripheral stalk. The central stalk, also called rotor shaft, is often seen as part of F(1). The peripheral stalk is seen as part of F(0). F(0) contains the membrane channel next to the rotor. F-type ATP synthases form dimers but each monomer functions independently in ATP generation. The dimer consists of 18 different polypeptides: ATP1 (subunit alpha, part of F(1), 3 molecules per monomer), ATP2 (subunit beta, part of F(1), 3 molecules per monomer), ATP3 (subunit gamma, part of the central stalk), ATP4 (subunit b, part of the peripheral stalk), ATP5/OSCP (subunit 5/OSCP, part of the peripheral stalk), ATP6 (subunit a, part of the peripheral stalk), ATP7 (subunit d, part of the peripheral stalk), ATP8 (subunit 8, part of the peripheral stalk), OLI1 (subunit c, part of the rotor, 10 molecules per monomer), ATP14 (subunit h, part of the peripheral stalk), ATP15 (subunit epsilon, part of the central stalk), ATP16 (subunit delta, part of the central stalk), ATP17 (subunit f, part of the peripheral stalk), ATP18 (subunit i/j, part of the peripheral stalk). Dimer-specific subunits are ATP19 (subunit k, at interface between monomers), ATP20 (subunit g, at interface between monomers), TIM11 (subunit e, at interface between monomers). Also contains subunit L.

The protein resides in the mitochondrion inner membrane. Mitochondrial membrane ATP synthase (F(1)F(0) ATP synthase or Complex V) produces ATP from ADP in the presence of a proton gradient across the membrane which is generated by electron transport complexes of the respiratory chain. F-type ATP synthases consist of two structural domains, F(1) - containing the extramembraneous catalytic core, and F(0) - containing the membrane proton channel, linked together by a central stalk and a peripheral stalk. During catalysis, ATP synthesis in the catalytic domain of F(1) is coupled via a rotary mechanism of the central stalk subunits to proton translocation. Part of the complex F(0) domain and the peripheral stalk, which acts as a stator to hold the catalytic alpha/ATP1(3)beta/ATP2(3) subcomplex and subunit a/ATP6 static relative to the rotary elements. In Pichia angusta (Yeast), this protein is ATP synthase subunit d, mitochondrial.